The sequence spans 188 residues: MATYSSNDFRSGLKIMFEGEPYAIESSEFVKPGKGQAFARVKMRRLLTGSRVEKTFKSTDSAEGADVVDTNMNYLYNDGEFYHFMHPETFEQHQVEEKTVGDSAKWLQDNAECIVTLWDGRAIAVQPPNFIEAEITDTDPGLKGDTAGTGGKPATLSTGAVVKVPLFVQIGEVVRVDTRSGEYVSRVK.

K34 carries the N6-(3,6-diaminohexanoyl)-5-hydroxylysine modification.

This sequence belongs to the elongation factor P family. Post-translationally, may be beta-lysylated on the epsilon-amino group of Lys-34 by the combined action of EpmA and EpmB, and then hydroxylated on the C5 position of the same residue by EpmC (if this protein is present). Lysylation is critical for the stimulatory effect of EF-P on peptide-bond formation. The lysylation moiety may extend toward the peptidyltransferase center and stabilize the terminal 3-CCA end of the tRNA. Hydroxylation of the C5 position on Lys-34 may allow additional potential stabilizing hydrogen-bond interactions with the P-tRNA.

It is found in the cytoplasm. It functions in the pathway protein biosynthesis; polypeptide chain elongation. Functionally, involved in peptide bond synthesis. Alleviates ribosome stalling that occurs when 3 or more consecutive Pro residues or the sequence PPG is present in a protein, possibly by augmenting the peptidyl transferase activity of the ribosome. Modification of Lys-34 is required for alleviation. The sequence is that of Elongation factor P from Pectobacterium carotovorum subsp. carotovorum (strain PC1).